Reading from the N-terminus, the 180-residue chain is Nucleoside triphosphate/diphosphate phosphatase (180 aa).

The active-site Proton donor is the Arg-26. Mg(2+) contacts are provided by Asn-90, Asp-106, Asp-108, Asp-110, Asp-123, and Glu-126.

Belongs to the Ntdp family. The cofactor is Mg(2+).

It catalyses the reaction a ribonucleoside 5'-triphosphate + H2O = a ribonucleoside 5'-diphosphate + phosphate + H(+). The enzyme catalyses a ribonucleoside 5'-diphosphate + H2O = a ribonucleoside 5'-phosphate + phosphate + H(+). Has nucleoside phosphatase activity towards nucleoside triphosphates and nucleoside diphosphates. This chain is Nucleoside triphosphate/diphosphate phosphatase, found in Staphylococcus aureus (strain MSSA476).